The following is a 268-amino-acid chain: Ribosomal RNA small subunit methyltransferase A (268 aa).

Residues asparagine 18, leucine 20, glycine 45, glutamate 66, aspartate 91, and asparagine 112 each contribute to the S-adenosyl-L-methionine site.

Belongs to the class I-like SAM-binding methyltransferase superfamily. rRNA adenine N(6)-methyltransferase family. RsmA subfamily.

The protein resides in the cytoplasm. It catalyses the reaction adenosine(1518)/adenosine(1519) in 16S rRNA + 4 S-adenosyl-L-methionine = N(6)-dimethyladenosine(1518)/N(6)-dimethyladenosine(1519) in 16S rRNA + 4 S-adenosyl-L-homocysteine + 4 H(+). In terms of biological role, specifically dimethylates two adjacent adenosines (A1518 and A1519) in the loop of a conserved hairpin near the 3'-end of 16S rRNA in the 30S particle. May play a critical role in biogenesis of 30S subunits. The polypeptide is Ribosomal RNA small subunit methyltransferase A (Shewanella oneidensis (strain ATCC 700550 / JCM 31522 / CIP 106686 / LMG 19005 / NCIMB 14063 / MR-1)).